The chain runs to 316 residues: NAC domain-containing protein 22 (316 aa).

One can recognise an NAC domain in the interval 17-170 (DLPGFRFHPT…DMVLCKIYRK (154 aa)). Residues 117–176 (IGLKKTLVFYQGRAPRGTKTDWVMNEYRLPDYGAARAAAPPPKEDMVLCKIYRKATPLKE) mediate DNA binding. The interval 229 to 260 (QSSSSSAAPSGSSSKNGGAGAPREAKKEEADV) is disordered. The segment covering 230-244 (SSSSSAAPSGSSSKN) has biased composition (low complexity).

The protein resides in the nucleus. In terms of biological role, transcription activator that binds sequence-specific DNA motifs. Involved in stress response. Plays a positive role in drought and salt stress tolerance through the modulation of abscisic acid-mediated signaling. The protein is NAC domain-containing protein 22 of Oryza sativa subsp. japonica (Rice).